Here is a 501-residue protein sequence, read N- to C-terminus: Postreplication repair E3 ubiquitin-protein ligase rad18 (501 aa).

The RING-type zinc finger occupies 34–72; that stretch reads CHVCKDFYDSPMLTSCNHTFCSLCIRRCLSVDSKCPLCR. The interval 111-154 is disordered; sequence QAILPDQAGPSSPSKRKATEMEGPKEEDPESKRPRRSTRSTRAR. Residues 127–142 are compositionally biased toward basic and acidic residues; sequence KATEMEGPKEEDPESK. A compositionally biased stretch (basic residues) spans 143-152; that stretch reads RPRRSTRSTR. A UBZ4-type zinc finger spans residues 186-214; it reads LVACPICLTRMKEQQVDRHLDTSCPGSPQ. Positions 189, 192, 204, and 209 each coordinate Zn(2+). The interval 203–250 is disordered; sequence RHLDTSCPGSPQAASKRRPIPAQTPQPSTFPSFNTRLTSQTNQKPPER. The segment covering 225 to 246 has biased composition (polar residues); the sequence is QTPQPSTFPSFNTRLTSQTNQK. Positions 256-290 constitute an SAP domain; that stretch reads YSMLRDTALRKKLSELGLSTHGSRQLLEKRHKEWI. A disordered region spans residues 377–501; the sequence is IKRQTLDGNG…GMKKPNPETC (125 aa).

This sequence belongs to the RAD18 family. As to quaternary structure, interacts with E2 mus-8/ubc2, forming a complex with ubiquitin ligase activity.

The protein localises to the nucleus. It carries out the reaction S-ubiquitinyl-[E2 ubiquitin-conjugating enzyme]-L-cysteine + [acceptor protein]-L-lysine = [E2 ubiquitin-conjugating enzyme]-L-cysteine + N(6)-ubiquitinyl-[acceptor protein]-L-lysine.. The protein operates within protein modification; protein ubiquitination. E3 RING-finger protein, member of the UBC2/RAD6 epistasis group. Associates to the E2 ubiquitin conjugating enzyme mus-8/ubc2 to form the mus-8/ubc2-uvs-2/rad18 ubiquitin ligase complex involved in postreplicative repair (PRR) of damaged DNA. The polypeptide is Postreplication repair E3 ubiquitin-protein ligase rad18 (uvs-2) (Neurospora crassa (strain ATCC 24698 / 74-OR23-1A / CBS 708.71 / DSM 1257 / FGSC 987)).